Reading from the N-terminus, the 436-residue chain is tRNA-2-methylthio-N(6)-dimethylallyladenosine synthase (436 aa).

Positions 5–121 constitute an MTTase N-terminal domain; that stretch reads RKLFIKTYGC…LPDMLERTEG (117 aa). [4Fe-4S] cluster contacts are provided by C14, C50, C84, C158, C162, and C165. One can recognise a Radical SAM core domain in the interval 144-374; the sequence is ATRGPAAFLT…TEQQRAAQMA (231 aa). In terms of domain architecture, TRAM spans 373-435; that stretch reads MAMVGREVGV…PNSLAGERLG (63 aa).

Belongs to the methylthiotransferase family. MiaB subfamily. In terms of assembly, monomer. [4Fe-4S] cluster serves as cofactor.

Its subcellular location is the cytoplasm. It carries out the reaction N(6)-dimethylallyladenosine(37) in tRNA + (sulfur carrier)-SH + AH2 + 2 S-adenosyl-L-methionine = 2-methylsulfanyl-N(6)-dimethylallyladenosine(37) in tRNA + (sulfur carrier)-H + 5'-deoxyadenosine + L-methionine + A + S-adenosyl-L-homocysteine + 2 H(+). Catalyzes the methylthiolation of N6-(dimethylallyl)adenosine (i(6)A), leading to the formation of 2-methylthio-N6-(dimethylallyl)adenosine (ms(2)i(6)A) at position 37 in tRNAs that read codons beginning with uridine. This chain is tRNA-2-methylthio-N(6)-dimethylallyladenosine synthase, found in Cereibacter sphaeroides (strain ATCC 17023 / DSM 158 / JCM 6121 / CCUG 31486 / LMG 2827 / NBRC 12203 / NCIMB 8253 / ATH 2.4.1.) (Rhodobacter sphaeroides).